We begin with the raw amino-acid sequence, 344 residues long: MNVAIIGATGYSGAELFRLLHGHPHVSRCDVFSSSQDGVHVSESFPHVGSVDGAVLHKLEIEALSRYDAVFFATPPGVSGEWAPALVDRGVKVIDLSGDFRLKDGAVYEQWYGREAAPAEYLQKAVYGLTEWNREAVREAVLLSNPGCYPTATLLGLAPLVKEGLIQEDSIIVDAKSGVSGAGRKAGLGTHFSEVNENVKIYKVNVHQHIPEIEQTLQTWNEAMEPITFSTHLIPMTRGIMATIYAKAKQPISPNDLVDLYKTSYEGSPFIRVRKVGQFPATKEVYGSNYCDIGLAYDERTGRVTVVSVIDNLMKGAAGQAVQNFNLMMGWDEAEGLQSLPIYP.

Cys-148 is a catalytic residue.

It belongs to the NAGSA dehydrogenase family. Type 1 subfamily.

Its subcellular location is the cytoplasm. The catalysed reaction is N-acetyl-L-glutamate 5-semialdehyde + phosphate + NADP(+) = N-acetyl-L-glutamyl 5-phosphate + NADPH + H(+). Its pathway is amino-acid biosynthesis; L-arginine biosynthesis; N(2)-acetyl-L-ornithine from L-glutamate: step 3/4. Its function is as follows. Catalyzes the NADPH-dependent reduction of N-acetyl-5-glutamyl phosphate to yield N-acetyl-L-glutamate 5-semialdehyde. The protein is N-acetyl-gamma-glutamyl-phosphate reductase of Geobacillus kaustophilus (strain HTA426).